The following is a 126-amino-acid chain: Thioredoxin-like 3-3 (126 aa).

A disordered region spans residues 1 to 24 (MRKQESEGANLEFESKSNDNGNVK). The 122-residue stretch at 5–126 (ESEGANLEFE…RLHDRLWLHS (122 aa)) folds into the Thioredoxin domain. Residues C55 and C58 each act as nucleophile in the active site. C55 and C58 are oxidised to a cystine.

The protein belongs to the thioredoxin family.

In terms of biological role, probable thiol-disulfide oxidoreductase that may participate in various redox reactions. In Arabidopsis thaliana (Mouse-ear cress), this protein is Thioredoxin-like 3-3.